Reading from the N-terminus, the 688-residue chain is DNA ligase (688 aa).

Residues aspartate 38 to aspartate 42, serine 87 to leucine 88, and glutamate 118 each bind NAD(+). Lysine 120 serves as the catalytic N6-AMP-lysine intermediate. NAD(+)-binding residues include arginine 141, glutamate 175, lysine 291, and lysine 315. Zn(2+)-binding residues include cysteine 409, cysteine 412, cysteine 428, and cysteine 433. One can recognise a BRCT domain in the interval methionine 590–glutamate 679.

The protein belongs to the NAD-dependent DNA ligase family. LigA subfamily. Mg(2+) serves as cofactor. Mn(2+) is required as a cofactor.

The catalysed reaction is NAD(+) + (deoxyribonucleotide)n-3'-hydroxyl + 5'-phospho-(deoxyribonucleotide)m = (deoxyribonucleotide)n+m + AMP + beta-nicotinamide D-nucleotide.. DNA ligase that catalyzes the formation of phosphodiester linkages between 5'-phosphoryl and 3'-hydroxyl groups in double-stranded DNA using NAD as a coenzyme and as the energy source for the reaction. It is essential for DNA replication and repair of damaged DNA. This chain is DNA ligase, found in Thermotoga petrophila (strain ATCC BAA-488 / DSM 13995 / JCM 10881 / RKU-1).